The chain runs to 184 residues: Peptidyl-tRNA hydrolase (184 aa).

Residue tyrosine 13 participates in tRNA binding. Histidine 18 serves as the catalytic Proton acceptor. Residues phenylalanine 59, asparagine 61, and asparagine 105 each coordinate tRNA.

The protein belongs to the PTH family. As to quaternary structure, monomer.

It is found in the cytoplasm. It catalyses the reaction an N-acyl-L-alpha-aminoacyl-tRNA + H2O = an N-acyl-L-amino acid + a tRNA + H(+). Functionally, hydrolyzes ribosome-free peptidyl-tRNAs (with 1 or more amino acids incorporated), which drop off the ribosome during protein synthesis, or as a result of ribosome stalling. Its function is as follows. Catalyzes the release of premature peptidyl moieties from peptidyl-tRNA molecules trapped in stalled 50S ribosomal subunits, and thus maintains levels of free tRNAs and 50S ribosomes. This chain is Peptidyl-tRNA hydrolase, found in Sulfurimonas denitrificans (strain ATCC 33889 / DSM 1251) (Thiomicrospira denitrificans (strain ATCC 33889 / DSM 1251)).